Here is a 227-residue protein sequence, read N- to C-terminus: Ornithine decarboxylase antizyme 1 (227 aa).

This sequence belongs to the ODC antizyme family. In terms of assembly, interacts with ODC1 and thereby sterically blocks ODC homodimerization. Forms a ternary complex with PSMB4 and OAZ1 before PSMB4 is incorporated into the 20S proteasome. Interacts with AZIN2; this interaction disrupts the interaction between the antizyme and ODC1. Interacts with FAM171A1.

Functionally, ornithine decarboxylase (ODC) antizyme protein that negatively regulates ODC activity and intracellular polyamine biosynthesis and uptake in response to increased intracellular polyamine levels. Binds to ODC monomers, inhibiting the assembly of the functional ODC homodimer, and targets the monomers for ubiquitin-independent proteolytic destruction by the 26S proteasome. Triggers ODC degradation by inducing the exposure of a cryptic proteasome-interacting surface of ODC. Stabilizes AZIN2 by interfering with its ubiquitination. Also inhibits cellular uptake of polyamines by inactivating the polyamine uptake transporter. SMAD1/OAZ1/PSMB4 complex mediates the degradation of the CREBBP/EP300 repressor SNIP1. Involved in the translocation of AZIN2 from ER-Golgi intermediate compartment (ERGIC) to the cytosol. This is Ornithine decarboxylase antizyme 1 (Oaz1) from Mus musculus (Mouse).